The chain runs to 1138 residues: Transmembrane channel-like protein 3 (1138 aa).

Over residues 1-15 (MEAAPGTAAAAAKPA) the composition is skewed to low complexity. 2 disordered regions span residues 1-20 (MEAAPGTAAAAAKPAKSCKK) and 29-54 (NIYTYQEPPHSNSDEDISEEKADSQD). At 1 to 155 (MEAAPGTAAA…VASYFIFLRW (155 aa)) the chain is on the cytoplasmic side. The chain crosses the membrane as a helical span at residues 156-176 (LFGINIVLTIMTGAFVVLPEL). Residues 177–202 (LAGAPFGSTVSKTIRQEDLKTAQDLD) lie on the Extracellular side of the membrane. Residues 203 to 223 (TIWSLGGYLQYSVLFYGYYGS) traverse the membrane as a helical segment. Residues 224–233 (DRKIGKAGYR) are Cytoplasmic-facing. A helical membrane pass occupies residues 234-254 (LPLAYFLVGMAVFAYSFIILL). The Extracellular portion of the chain corresponds to 255–327 (KKMAKNSRMS…KNLAVTISLR (73 aa)). N-linked (GlcNAc...) asparagine glycosylation is present at Asn272. The helical transmembrane segment at 328-348 (IIANILVLLSLTGSIYIIYFV) threads the bilayer. The Cytoplasmic segment spans residues 349 to 369 (VDRSQKLENNKRELTLWEKNE). The chain crosses the membrane as a helical span at residues 370-390 (VSVVVSLITMIAPSAFELVAA). Residues 391–401 (LEMYHPRTTLR) are Extracellular-facing. The chain crosses the membrane as a helical span at residues 402–422 (FQLARVLVLYLGNLYSLIIAL). Topologically, residues 423–508 (LDKVNSMSVT…CWETYVGQEM (86 aa)) are cytoplasmic. Residues 509 to 529 (LKLSIIDMIFTVASILLIDFF) traverse the membrane as a helical segment. The Extracellular segment spans residues 530–569 (RGLCVRYLSDCWCWDLESKFPEYGEFKIAENVLHLVYNQG). A helical membrane pass occupies residues 570-590 (MIWMGAFFSPCLPAFNVLKLI). The Cytoplasmic segment spans residues 591–618 (GLMYLRSWAVLTCNVPHQQVFRASRSNN). The chain crosses the membrane as a helical span at residues 619–639 (FYLAMLLFMLFLCMLPTIFAI). The Extracellular segment spans residues 640-676 (ARYKPSLSCGPFSGQEKIYDIVSETIQNDFPAWFNSV). The chain crosses the membrane as a helical span at residues 677–697 (IAYISSPVVVLPALLLLFMLI). Topologically, residues 698 to 1138 (YYLQSIARSL…EPNELVCSNV (441 aa)) are cytoplasmic. The segment covering 753 to 763 (NSEGTRFQSLD) has biased composition (polar residues). Disordered stretches follow at residues 753-859 (NSEG…RYPS), 973-1005 (SPHPSEDEEDEEALGRHYVKRSHRPRSLSDLRP), and 1065-1095 (PKTKHMLEQSLTESDSVSIESSSDPQNSSND). The span at 764 to 773 (GSDKRPDKDG) shows a compositional bias: basic and acidic residues. Polar residues-rich tracts occupy residues 777–795 (SQESSVRASTPRKNGSVLN) and 804–813 (TRIQTISQTV). Low complexity predominate over residues 828 to 845 (TTPTTSASLTPAPSVSSA). Over residues 989–998 (HYVKRSHRPR) the composition is skewed to basic residues. Over residues 1074 to 1095 (SLTESDSVSIESSSDPQNSSND) the composition is skewed to low complexity.

Belongs to the TMC family. In terms of tissue distribution, expressed in a range of tissues including cerebrum, cerebellum, retina, cochlea, lung, liver and heart. Also expressed in the apical, medial and basal portions of the basillar papilla.

Its subcellular location is the membrane. Probable component of an ion channel. The chain is Transmembrane channel-like protein 3 from Gallus gallus (Chicken).